A 619-amino-acid chain; its full sequence is Dihydroxy-acid dehydratase (619 aa).

Residue aspartate 81 participates in Mg(2+) binding. Cysteine 122 provides a ligand contact to [2Fe-2S] cluster. The Mg(2+) site is built by aspartate 123 and lysine 124. Lysine 124 is subject to N6-carboxylysine. Cysteine 201 contacts [2Fe-2S] cluster. Glutamate 496 contacts Mg(2+). Serine 522 acts as the Proton acceptor in catalysis.

Belongs to the IlvD/Edd family. In terms of assembly, homodimer. [2Fe-2S] cluster serves as cofactor. It depends on Mg(2+) as a cofactor.

The catalysed reaction is (2R)-2,3-dihydroxy-3-methylbutanoate = 3-methyl-2-oxobutanoate + H2O. It carries out the reaction (2R,3R)-2,3-dihydroxy-3-methylpentanoate = (S)-3-methyl-2-oxopentanoate + H2O. It functions in the pathway amino-acid biosynthesis; L-isoleucine biosynthesis; L-isoleucine from 2-oxobutanoate: step 3/4. The protein operates within amino-acid biosynthesis; L-valine biosynthesis; L-valine from pyruvate: step 3/4. Functionally, functions in the biosynthesis of branched-chain amino acids. Catalyzes the dehydration of (2R,3R)-2,3-dihydroxy-3-methylpentanoate (2,3-dihydroxy-3-methylvalerate) into 2-oxo-3-methylpentanoate (2-oxo-3-methylvalerate) and of (2R)-2,3-dihydroxy-3-methylbutanoate (2,3-dihydroxyisovalerate) into 2-oxo-3-methylbutanoate (2-oxoisovalerate), the penultimate precursor to L-isoleucine and L-valine, respectively. This chain is Dihydroxy-acid dehydratase, found in Burkholderia vietnamiensis (strain G4 / LMG 22486) (Burkholderia cepacia (strain R1808)).